We begin with the raw amino-acid sequence, 194 residues long: 7-methyl-GTP pyrophosphatase (194 aa).

Aspartate 71 (proton acceptor) is an active-site residue.

This sequence belongs to the Maf family. YceF subfamily. A divalent metal cation is required as a cofactor.

It localises to the cytoplasm. The enzyme catalyses N(7)-methyl-GTP + H2O = N(7)-methyl-GMP + diphosphate + H(+). Functionally, nucleoside triphosphate pyrophosphatase that hydrolyzes 7-methyl-GTP (m(7)GTP). May have a dual role in cell division arrest and in preventing the incorporation of modified nucleotides into cellular nucleic acids. This chain is 7-methyl-GTP pyrophosphatase, found in Aromatoleum aromaticum (strain DSM 19018 / LMG 30748 / EbN1) (Azoarcus sp. (strain EbN1)).